The sequence spans 325 residues: tRNA uridine(34) hydroxylase (325 aa).

The Rhodanese domain maps to 122–218 (EENRCLVLDV…YGQAMGTGKW (97 aa)). The active-site Cysteine persulfide intermediate is the Cys178.

It belongs to the TrhO family.

The enzyme catalyses uridine(34) in tRNA + AH2 + O2 = 5-hydroxyuridine(34) in tRNA + A + H2O. Its function is as follows. Catalyzes oxygen-dependent 5-hydroxyuridine (ho5U) modification at position 34 in tRNAs. The sequence is that of tRNA uridine(34) hydroxylase from Chlamydia felis (strain Fe/C-56) (Chlamydophila felis).